We begin with the raw amino-acid sequence, 309 residues long: Polyprenal reductase (309 aa).

The next 7 membrane-spanning stretches (helical) occupy residues 12–32, 72–92, 114–134, 151–171, 184–204, 242–262, and 270–290; these read LPLYLLVSTLGLAISCCFTLI, FYAIGLLTLFICLHTVHSLIY, IPPITPSTSILALLLISLHVA, MNLFHYAVGIVHYIILPISIM, LHVSIDDISLTQWAGAVLFWI, LVSCPHFLFEICIYLSLFLVI, and FIIMFVCINQTFAALITHSWY.

This sequence belongs to the steroid 5-alpha reductase family. Polyprenal reductase subfamily.

It localises to the endoplasmic reticulum membrane. It carries out the reaction a di-trans,poly-cis-dolichal + NADP(+) = a di-trans,poly-cis-polyprenal + NADPH + H(+). It functions in the pathway protein modification; protein glycosylation. Plays a key role in early steps of protein N-linked glycosylation by being involved in the conversion of polyprenol into dolichol. Acts as a polyprenal reductase that mediates the reduction of polyprenal into dolichal in a NADP-dependent mechanism. Dolichols are required for the synthesis of dolichol-linked monosaccharides and the oligosaccharide precursor used for N-glycosylation. This is Polyprenal reductase from Caenorhabditis elegans.